Here is a 218-residue protein sequence, read N- to C-terminus: Eukaryotic translation initiation factor 3 subunit K (218 aa).

The residue at position 2 (alanine 2) is an N-acetylalanine. Threonine 28 bears the Phosphothreonine mark. In terms of domain architecture, PCI spans 42–204 (YDLEANLAVL…SIKPKNIVEK (163 aa)). Position 217 is a phosphoserine (serine 217).

As to quaternary structure, component of the eukaryotic translation initiation factor 3 (eIF-3) complex, which is composed of 13 subunits: EIF3A, EIF3B, EIF3C, EIF3D, EIF3E, EIF3F, EIF3G, EIF3H, EIF3I, EIF3J, EIF3K, EIF3L and EIF3M. The eIF-3 complex appears to include 3 stable modules: module A is composed of EIF3A, EIF3B, EIF3G and EIF3I; module B is composed of EIF3F, EIF3H, and EIF3M; and module C is composed of EIF3C, EIF3D, EIF3E, EIF3K and EIF3L. EIF3C of module C binds EIF3B of module A and EIF3H of module B, thereby linking the three modules. EIF3J is a labile subunit that binds to the eIF-3 complex via EIF3B. The eIF-3 complex interacts with RPS6KB1 under conditions of nutrient depletion. Mitogenic stimulation leads to binding and activation of a complex composed of MTOR and RPTOR, leading to phosphorylation and release of RPS6KB1 and binding of EIF4B to eIF-3. Interacts with CCND3, but not with CCND1 and CCND2. Ubiquitous, with the highest levels of expression in brain, testis and kidney.

It is found in the nucleus. The protein resides in the cytoplasm. In terms of biological role, component of the eukaryotic translation initiation factor 3 (eIF-3) complex, which is required for several steps in the initiation of protein synthesis. The eIF-3 complex associates with the 40S ribosome and facilitates the recruitment of eIF-1, eIF-1A, eIF-2:GTP:methionyl-tRNAi and eIF-5 to form the 43S pre-initiation complex (43S PIC). The eIF-3 complex stimulates mRNA recruitment to the 43S PIC and scanning of the mRNA for AUG recognition. The eIF-3 complex is also required for disassembly and recycling of post-termination ribosomal complexes and subsequently prevents premature joining of the 40S and 60S ribosomal subunits prior to initiation. The eIF-3 complex specifically targets and initiates translation of a subset of mRNAs involved in cell proliferation, including cell cycling, differentiation and apoptosis, and uses different modes of RNA stem-loop binding to exert either translational activation or repression. The protein is Eukaryotic translation initiation factor 3 subunit K of Homo sapiens (Human).